The sequence spans 72 residues: Translation initiation factor IF-1 (72 aa).

In terms of domain architecture, S1-like spans 1-72; that stretch reads MAKEDCIEME…TKGRIKFRSK (72 aa).

This sequence belongs to the IF-1 family. As to quaternary structure, component of the 30S ribosomal translation pre-initiation complex which assembles on the 30S ribosome in the order IF-2 and IF-3, IF-1 and N-formylmethionyl-tRNA(fMet); mRNA recruitment can occur at any time during PIC assembly.

The protein resides in the cytoplasm. Functionally, one of the essential components for the initiation of protein synthesis. Stabilizes the binding of IF-2 and IF-3 on the 30S subunit to which N-formylmethionyl-tRNA(fMet) subsequently binds. Helps modulate mRNA selection, yielding the 30S pre-initiation complex (PIC). Upon addition of the 50S ribosomal subunit IF-1, IF-2 and IF-3 are released leaving the mature 70S translation initiation complex. The protein is Translation initiation factor IF-1 of Francisella tularensis subsp. tularensis (strain FSC 198).